A 402-amino-acid chain; its full sequence is Septin CDC11 (402 aa).

Met-1 carries the N-acetylmethionine modification. A Phosphoserine modification is found at Ser-4. The short motif at 14–21 (RKRKTLKK) is the Basic motif element. The Septin-type G domain occupies 21 to 307 (KSINFSIMII…ENYRTEALSG (287 aa)). The segment at 31-38 (GESGSGRS) is G1 motif. 31–38 (GESGSGRS) contacts GTP. The interval 89-92 (DTPN) is G3 motif. The segment at 171 to 174 (SKAD) is G4 motif. Residues 172 to 180 (KADSLTPKE) and Gly-233 each bind GTP. Residues 318–376 (AKQEISESDYLMKEEQIKLEEERLRKFEERVHQDLINKRKELLERENELKEIEKRLLAE) are a coiled coil. Ser-394 is modified (phosphoserine; by CDC28). Residue Ser-395 is modified to Phosphoserine; by GIN4.

It belongs to the TRAFAC class TrmE-Era-EngA-EngB-Septin-like GTPase superfamily. Septin GTPase family. In terms of assembly, component of the septin complex which consists of CDC3, CDC10, CDC11, CDC12 and probably SEP7. The purified septin complex appeared to have a stoichiometry of 2 CDC3, 1 to 2 CDC10, 1 CDC11, 2 CDC12, and 1 or none SEP7 subunit. Interacts with HSL1. In terms of processing, hyphal induction causes immediate phosphorylation at Ser-395 by GIN4 and at Ser-394 by CDC28-CCN1. GIN4 phosphorylation at Ser-395 primes CDC11 for further phosphorylation by CDC28-CCN1. CDC28-HGC1 then maintains CDC11 phosphorylation throughout hyphal growth. Ser-4 is also phosphorylated in yeast cells but not hyphal cells. Post-translationally, met-1 is acetylated.

It is found in the bud neck. Its function is as follows. Septins are GTPases involved in cytokinesis that assemble early in the cell cycle as a patch at the incipient bud site and form a ring before bud emergence, which transforms into an hour-glass shaped collar of cortical filaments that spans both sides of the mother-bud neck. This collar persists until just before cytokinesis, when it splits into two rings that occupy opposite sides of the neck. The septins at the bud neck serve as a structural scaffold that recruits different components involved in diverse processes at specific stages during the cell cycle. Many proteins bind asymmetrically to the septin collar. The septin assembly is regulated by protein kinase GIN4. Septins are also involved in cell morphogenesis, chlamydospores morphogenesis, bud site selection, chitin deposition, cell cycle regulation, cell compartmentalization, and spore wall formation. CDC11 is required for the correct localization of SEC3 at bud tips and bud necks. Plays a key role in invasive growth and virulence. This chain is Septin CDC11 (CDC11), found in Candida albicans (strain SC5314 / ATCC MYA-2876) (Yeast).